The following is a 299-amino-acid chain: Trans-aconitate 3-methyltransferase (299 aa).

N-acetylserine is present on Ser-2.

Belongs to the methyltransferase superfamily. Tam family.

Its subcellular location is the cytoplasm. The enzyme catalyses trans-aconitate + S-adenosyl-L-methionine = (E)-2-(methoxycarbonylmethyl)but-2-enedioate + S-adenosyl-L-homocysteine. In terms of biological role, catalyzes the S-adenosylmethionine monomethyl esterification of trans-aconitate and 3-isopropylmalate at high affinity and of other molecules like cis-aconitate, isocitrate, and citrate at lower velocities and affinities. The function of trans-aconitate methylation appears to be in reducing the toxicity of this spontaneous breakdown product of cis-aconitate. The role of 3-isopropylmalate methylation is unclear but may represent a metabolic branch at 3-isopropylmalate, where some of the material is taken in the pathway leading to leucine and some is taken in a pathway to the 3-isopropylmalate methyl ester, a molecule that provides a signal to switch from vegetative to invasive growth in response to amino acid starvation. The sequence is that of Trans-aconitate 3-methyltransferase (TMT1) from Saccharomyces cerevisiae (strain ATCC 204508 / S288c) (Baker's yeast).